The following is an 86-amino-acid chain: Small nuclear ribonucleoprotein F (86 aa).

S2 is subject to N-acetylserine. The 73-residue stretch at 6-78 (NPKPFLNGLT…VLYIRGVEEE (73 aa)) folds into the Sm domain.

This sequence belongs to the snRNP Sm proteins family. SmF/LSm6 subfamily. Core component of the spliceosomal U1, U2, U4 and U5 small nuclear ribonucleoproteins (snRNPs), the building blocks of the spliceosome. Most spliceosomal snRNPs contain a common set of Sm proteins, SNRPB, SNRPD1, SNRPD2, SNRPD3, SNRPE, SNRPF and SNRPG that assemble in a heptameric protein ring on the Sm site of the small nuclear RNA to form the core snRNP. Component of the U1 snRNP. The U1 snRNP is composed of the U1 snRNA and the 7 core Sm proteins SNRPB, SNRPD1, SNRPD2, SNRPD3, SNRPE, SNRPF and SNRPG, and at least three U1 snRNP-specific proteins SNRNP70/U1-70K, SNRPA/U1-A and SNRPC/U1-C. Component of the U4/U6-U5 tri-snRNP complex composed of the U4, U6 and U5 snRNAs and at least PRPF3, PRPF4, PRPF6, PRPF8, PRPF31, SNRNP200, TXNL4A, SNRNP40, SNRPB, SNRPD1, SNRPD2, SNRPD3, SNRPE, SNRPF, SNRPG, DDX23, CD2BP2, PPIH, SNU13, EFTUD2, SART1 and USP39, plus LSM2, LSM3, LSM4, LSM5, LSM6, LSM7 and LSM8. Component of the U7 snRNP complex, or U7 Sm protein core complex, that is composed of the U7 snRNA and at least LSM10, LSM11, SNRPB, SNRPD3, SNRPE, SNRPF and SNRPG; the complex does not contain SNRPD1 and SNRPD2. Component of the minor spliceosome, which splices U12-type introns. Part of the SMN-Sm complex that contains SMN1, GEMIN2/SIP1, DDX20/GEMIN3, GEMIN4, GEMIN5, GEMIN6, GEMIN7, GEMIN8, STRAP/UNRIP and the Sm proteins SNRPB, SNRPD1, SNRPD2, SNRPD3, SNRPE, SNRPF and SNRPG; catalyzes core snRNPs assembly. Forms a 6S pICln-Sm complex composed of CLNS1A/pICln, SNRPD1, SNRPD2, SNRPE, SNRPF and SNRPG; ring-like structure where CLNS1A/pICln mimics additional Sm proteins and which is unable to assemble into the core snRNP. Interacts with GEMIN2 (via N-terminus); the interaction is direct. Interacts with SNRPD2; the interaction is direct. Interacts with SNRPE; the interaction is direct.

It localises to the cytoplasm. The protein localises to the cytosol. The protein resides in the nucleus. Functionally, plays a role in pre-mRNA splicing as a core component of the spliceosomal U1, U2, U4 and U5 small nuclear ribonucleoproteins (snRNPs), the building blocks of the spliceosome. Component of both the pre-catalytic spliceosome B complex and activated spliceosome C complexes. As a component of the minor spliceosome, involved in the splicing of U12-type introns in pre-mRNAs. As part of the U7 snRNP it is involved in histone 3'-end processing. This is Small nuclear ribonucleoprotein F (SNRPF) from Homo sapiens (Human).